Consider the following 397-residue polypeptide: ATP-dependent RNA helicase eIF4A (397 aa).

Residues 23–51 (YKFDDLNLKPNIVRGIFGYGYETPSAIQQ) carry the Q motif motif. In terms of domain architecture, Helicase ATP-binding spans 54–224 (ILPITEGRDV…TKFMNNPVRI (171 aa)). Residue 67-74 (AQSGTGKT) participates in ATP binding. The DEAD box signature appears at 172–175 (DEAD). Residues 255 to 396 (DLYDSISVTQ…EMPADIGSLF (142 aa)) form the Helicase C-terminal domain.

The protein belongs to the DEAD box helicase family. eIF4A subfamily. Component of the eIF4F complex, which composition varies with external and internal environmental conditions. It is composed of at least eIF4A, eIF4E and eIF4G.

The protein localises to the cytoplasm. It catalyses the reaction ATP + H2O = ADP + phosphate + H(+). Functionally, ATP-dependent RNA helicase which is a subunit of the eIF4F complex involved in cap recognition and is required for mRNA binding to ribosome. In the current model of translation initiation, eIF4A unwinds RNA secondary structures in the 5'-UTR of mRNAs which is necessary to allow efficient binding of the small ribosomal subunit, and subsequent scanning for the initiator codon. The polypeptide is ATP-dependent RNA helicase eIF4A (TIF1) (Lodderomyces elongisporus (strain ATCC 11503 / CBS 2605 / JCM 1781 / NBRC 1676 / NRRL YB-4239) (Yeast)).